The chain runs to 549 residues: Cation/acetate symporter ActP (549 aa).

The next 13 helical transmembrane spans lie at 33-53, 77-97, 103-123, 148-168, 183-203, 206-226, 262-282, 303-323, 355-375, 404-424, 428-448, 464-484, and 493-513; these read WQAIIMFLIFVVFTLGITYWA, LAIAGDYMSAASFLGISALVF, GLIYSLGFLVGWPIILFLIAE, ILSACGSLVVVALYLIAQMVG, IAVVLVGVLMMMYVLFGGMLA, WVQIIKAVLLLFGASFMAFMV, ISALSLGLGLMFGTAGLPHIL, GFMGYFYILTFIIGFGAIMLV, LFLGFISAVAFATILAVVAGL, VSKITVLILGVIAIILGVLFE, IAFMVGLAFAIAASCNFPIIL, GGWLGLITAVVLMILGPTIWV, and IFPYEYPALFSISVAFLGIWF.

This sequence belongs to the sodium:solute symporter (SSF) (TC 2.A.21) family.

The protein resides in the cell inner membrane. Its function is as follows. Transports acetate. This is Cation/acetate symporter ActP from Escherichia coli O17:K52:H18 (strain UMN026 / ExPEC).